The sequence spans 209 residues: Glycerol-3-phosphate acyltransferase (209 aa).

The next 5 helical transmembrane spans lie at 4–24 (IAIGMIIFAYLCGSVSNAILI), 53–75 (LAAAGVMVFDVLKGMIPVWIGYG), 80–102 (PFWLGLVAIAACLGHIYPIFFHF), 112–132 (LGAIAPIGYDLSGLMIGTWLL), and 138–158 (GYSSLGAIVSALIAPFYVWWF).

It belongs to the PlsY family. Probably interacts with PlsX.

It localises to the cell inner membrane. The catalysed reaction is an acyl phosphate + sn-glycerol 3-phosphate = a 1-acyl-sn-glycero-3-phosphate + phosphate. Its pathway is lipid metabolism; phospholipid metabolism. Its function is as follows. Catalyzes the transfer of an acyl group from acyl-phosphate (acyl-PO(4)) to glycerol-3-phosphate (G3P) to form lysophosphatidic acid (LPA). This enzyme utilizes acyl-phosphate as fatty acyl donor, but not acyl-CoA or acyl-ACP. This Sodalis glossinidius (strain morsitans) protein is Glycerol-3-phosphate acyltransferase.